The chain runs to 65 residues: Photosystem II reaction center protein Z (65 aa).

A run of 2 helical transmembrane segments spans residues Leu-11 to Ala-31 and Trp-44 to Phe-64.

The protein belongs to the PsbZ family. As to quaternary structure, PSII is composed of 1 copy each of membrane proteins PsbA, PsbB, PsbC, PsbD, PsbE, PsbF, PsbH, PsbI, PsbJ, PsbK, PsbL, PsbM, PsbT, PsbY, PsbZ, Psb30/Ycf12, at least 3 peripheral proteins of the oxygen-evolving complex and a large number of cofactors. It forms dimeric complexes.

Its subcellular location is the plastid. It is found in the chloroplast thylakoid membrane. In terms of biological role, may control the interaction of photosystem II (PSII) cores with the light-harvesting antenna, regulates electron flow through the 2 photosystem reaction centers. PSII is a light-driven water plastoquinone oxidoreductase, using light energy to abstract electrons from H(2)O, generating a proton gradient subsequently used for ATP formation. The polypeptide is Photosystem II reaction center protein Z (Euglena gracilis).